A 486-amino-acid chain; its full sequence is MQVGEEMASLTKIACPIVMTSLLIFSRSIISMWFLSHLGKVELAGGALAMGFGNITGVSVLKGLSVGMDPICGQAFGAKRWTVLSHTFQKMFCLLIVVSVPIAVTWLNIEPIFLRLGQDPDITKVAKTYMLFFVPELLAQAMLHPLRTFLRTQGLTSPLTISAIVSILLHPLFNYVFVVRMRLGVKGVAIAMAFNTMNIDVGLLVYTCFSDSLIKPWEGLALRSLFRGWWPLLSLAAPSAISVCLEYWWYEIMLFLCGLLGNPKASVAAMGILIQTTGILYVVPFAISSAIATRVGHALGGGQPTRAQCTTVIGLILAVAYGLAAAVFVTALRSVWGKMFTDEPEILGLISAALPILGLCEIGNSPQTAACGVLTGTARPKDGARVNLCAFYIVGLPVAVTTTFGFKVGFRGLWFGLLSAQMTCLVMMLYTLIRTDWSHQVKRAEELTSAAADKSHSEDETVHAEVQDDDDVSSNDLEIGLLQNTN.

12 helical membrane passes run 15 to 35 (CPIVMTSLLIFSRSIISMWFL), 45 to 65 (GGALAMGFGNITGVSVLKGLS), 94 to 114 (LLIVVSVPIAVTWLNIEPIFL), 130 to 150 (MLFFVPELLAQAMLHPLRTFL), 159 to 179 (LTISAIVSILLHPLFNYVFVV), 187 to 207 (GVAIAMAFNTMNIDVGLLVYT), 240 to 260 (AISVCLEYWWYEIMLFLCGLL), 267 to 287 (VAAMGILIQTTGILYVVPFAI), 312 to 332 (VIGLILAVAYGLAAAVFVTAL), 346 to 366 (ILGLISAALPILGLCEIGNSP), 386 to 406 (VNLCAFYIVGLPVAVTTTFGF), and 413 to 433 (LWFGLLSAQMTCLVMMLYTLI). A disordered region spans residues 448–474 (TSAAADKSHSEDETVHAEVQDDDDVSS). Residues 453 to 466 (DKSHSEDETVHAEV) are compositionally biased toward basic and acidic residues.

It belongs to the multi antimicrobial extrusion (MATE) (TC 2.A.66.1) family.

The protein resides in the membrane. The chain is Protein DETOXIFICATION 53 from Arabidopsis thaliana (Mouse-ear cress).